The chain runs to 179 residues: Protein GrpE (179 aa).

Residues 1 to 22 (MTDNNIENNEEEIRKAPSANDR) are disordered. The span at 11 to 22 (EEIRKAPSANDR) shows a compositional bias: basic and acidic residues.

It belongs to the GrpE family. As to quaternary structure, homodimer.

The protein resides in the cytoplasm. Participates actively in the response to hyperosmotic and heat shock by preventing the aggregation of stress-denatured proteins, in association with DnaK and GrpE. It is the nucleotide exchange factor for DnaK and may function as a thermosensor. Unfolded proteins bind initially to DnaJ; upon interaction with the DnaJ-bound protein, DnaK hydrolyzes its bound ATP, resulting in the formation of a stable complex. GrpE releases ADP from DnaK; ATP binding to DnaK triggers the release of the substrate protein, thus completing the reaction cycle. Several rounds of ATP-dependent interactions between DnaJ, DnaK and GrpE are required for fully efficient folding. The chain is Protein GrpE from Rickettsia canadensis (strain McKiel).